Here is a 186-residue protein sequence, read N- to C-terminus: Adenylate kinase (186 aa).

An ATP-binding site is contributed by G10–T15. Positions A30–V55 are NMP. AMP-binding positions include T31, R36, G53–V55, G81–R84, and Q88. The segment at A122–D132 is LID. ATP is bound at residue R123. AMP-binding residues include R129 and R140. K168 lines the ATP pocket.

The protein belongs to the adenylate kinase family. As to quaternary structure, monomer.

It localises to the cytoplasm. The enzyme catalyses AMP + ATP = 2 ADP. The protein operates within purine metabolism; AMP biosynthesis via salvage pathway; AMP from ADP: step 1/1. Catalyzes the reversible transfer of the terminal phosphate group between ATP and AMP. Plays an important role in cellular energy homeostasis and in adenine nucleotide metabolism. This chain is Adenylate kinase, found in Tropheryma whipplei (strain TW08/27) (Whipple's bacillus).